Here is a 384-residue protein sequence, read N- to C-terminus: MSEFWVISAPGDKTPQQTYERLQKATMGSGQNLSNCYKFSIPELKVGTLDSLIGLTDDLGKLDTFCEGVCRKVASYMGEVLEDQKDKLSSNLSAGEGTLVNFMHRFQWNMAKYPTKQPIKSLTEILSKVVTQVDTDLRSKSQAYNNLKSSLQNMERKATGSLLLRNLSQIVKKDDFIDGSEYLRTVIVAVPVALFGEWEKNYESLADYVAPKSSRLLTQDEEYGLFATSIFKKVYEEFKYNCSRYKFFVREFNFNEQDSVVRQDQINKIASEKRKMLGPLLRWLKVNFSEVFTAWIHIKALRVFVESVLRYGLPVNFQAVVLDPPKKNRKRLRDVLNNLYCKLDSTGLTNVDAEDSVPGLSLGMQEYYPYVFYKVILDFESRSF.

This sequence belongs to the V-ATPase C subunit family. V-ATPase is a heteromultimeric enzyme made up of two complexes: the ATP-hydrolytic V1 complex and the proton translocation V0 complex. The V1 complex consists of three catalytic AB heterodimers that form a heterohexamer, three peripheral stalks each consisting of EG heterodimers, one central rotor including subunits D and F, and the regulatory subunits C and H. The proton translocation complex V0 consists of the proton transport subunit a, a ring of proteolipid subunits c9c'', rotary subunit d, subunits e and f, and the accessory subunits vah-19/Ac45 and vah-20/PRR.

In terms of biological role, subunit of the V1 complex of vacuolar(H+)-ATPase (V-ATPase), a multisubunit enzyme composed of a peripheral complex (V1) that hydrolyzes ATP and a membrane integral complex (V0) that translocates protons. V-ATPase is responsible for acidifying and maintaining the pH of intracellular compartments and in some cell types, is targeted to the plasma membrane, where it is responsible for acidifying the extracellular environment. Subunit C is necessary for the assembly of the catalytic sector of the enzyme and is likely to have a specific function in its catalytic activity. This Ascidia sydneiensis samea (Vanadium-rich ascidian) protein is V-type proton ATPase subunit C 2 (VATC).